A 310-amino-acid chain; its full sequence is Acetyl-coenzyme A carboxylase carboxyl transferase subunit alpha (310 aa).

The CoA carboxyltransferase C-terminal domain occupies 36–286; it reads NLEKEITKTY…GEYILKQLDE (251 aa).

The protein belongs to the AccA family. As to quaternary structure, acetyl-CoA carboxylase is a heterohexamer composed of biotin carboxyl carrier protein (AccB), biotin carboxylase (AccC) and two subunits each of ACCase subunit alpha (AccA) and ACCase subunit beta (AccD).

It is found in the cytoplasm. The catalysed reaction is N(6)-carboxybiotinyl-L-lysyl-[protein] + acetyl-CoA = N(6)-biotinyl-L-lysyl-[protein] + malonyl-CoA. Its pathway is lipid metabolism; malonyl-CoA biosynthesis; malonyl-CoA from acetyl-CoA: step 1/1. Its function is as follows. Component of the acetyl coenzyme A carboxylase (ACC) complex. First, biotin carboxylase catalyzes the carboxylation of biotin on its carrier protein (BCCP) and then the CO(2) group is transferred by the carboxyltransferase to acetyl-CoA to form malonyl-CoA. This Campylobacter fetus subsp. fetus (strain 82-40) protein is Acetyl-coenzyme A carboxylase carboxyl transferase subunit alpha.